Reading from the N-terminus, the 555-residue chain is CTP synthase (555 aa).

The interval 1–267 is amidoligase domain; the sequence is MAKYIFVTGG…GNYLTLRLGL (267 aa). S13 is a CTP binding site. Residue S13 coordinates UTP. 14–19 serves as a coordination point for ATP; the sequence is SVGKGI. Residue Y54 participates in L-glutamine binding. D71 contacts ATP. Mg(2+) is bound by residues D71 and E141. CTP is bound by residues 148–150, 188–193, and K224; these read DIE and KTKPTQ. Residues 188-193 and K224 contribute to the UTP site; that span reads KTKPTQ. Positions 292–535 constitute a Glutamine amidotransferase type-1 domain; sequence AIALVGKYVE…IAAAAQTFRE (244 aa). G354 contacts L-glutamine. C381 (nucleophile; for glutamine hydrolysis) is an active-site residue. L-glutamine is bound by residues 382-385, E406, and R463; that span reads LGMQ. Catalysis depends on residues H508 and E510.

This sequence belongs to the CTP synthase family. In terms of assembly, homotetramer.

The enzyme catalyses UTP + L-glutamine + ATP + H2O = CTP + L-glutamate + ADP + phosphate + 2 H(+). It carries out the reaction L-glutamine + H2O = L-glutamate + NH4(+). It catalyses the reaction UTP + NH4(+) + ATP = CTP + ADP + phosphate + 2 H(+). The protein operates within pyrimidine metabolism; CTP biosynthesis via de novo pathway; CTP from UDP: step 2/2. Its activity is regulated as follows. Allosterically activated by GTP, when glutamine is the substrate; GTP has no effect on the reaction when ammonia is the substrate. The allosteric effector GTP functions by stabilizing the protein conformation that binds the tetrahedral intermediate(s) formed during glutamine hydrolysis. Inhibited by the product CTP, via allosteric rather than competitive inhibition. Catalyzes the ATP-dependent amination of UTP to CTP with either L-glutamine or ammonia as the source of nitrogen. Regulates intracellular CTP levels through interactions with the four ribonucleotide triphosphates. This chain is CTP synthase, found in Roseiflexus castenholzii (strain DSM 13941 / HLO8).